Reading from the N-terminus, the 1031-residue chain is GTPase activating protein Gyp51 (1031 aa).

Positions 1 to 32 (MAFTEANEREVQSSYEKENVKIIREEEAKDQE) are enriched in basic and acidic residues. Disordered regions lie at residues 1–229 (MAFT…TNVN), 278–317 (FIEQNGPNSDTVSGFKETSSIVNSSSTTEKPGVALDSQND), 339–371 (DHLPENVESEPVAGKENETAKNESGASDNDHKA), 420–459 (NDELSASGSQEPHPKDGTNSTSSLPLDTNNLSNSEPPSHV), and 490–520 (KKNTAFSPGTSLSTNHVKTKSRSAHNNSTSP). Polar residues predominate over residues 43–59 (TGTSPDLNFFSTQNVMQ). Acidic residues predominate over residues 62 to 78 (FEDEYSEFSNEDDEAEI). Polar residues predominate over residues 105–117 (SQQSVEEQNNTTN). Over residues 195 to 217 (EDLKDEVKSVHEFNEPNDLRQQE) the composition is skewed to basic and acidic residues. Residues 219–229 (SYSDDDDTNVN) show a composition bias toward acidic residues. Over residues 278-306 (FIEQNGPNSDTVSGFKETSSIVNSSSTTE) the composition is skewed to polar residues. Polar residues-rich tracts occupy residues 420 to 429 (NDELSASGSQ), 436 to 455 (GTNSTSSLPLDTNNLSNSEP), and 493 to 505 (TAFSPGTSLSTNH). The region spanning 610 to 806 (HNSHTVHTVV…HLYDILFLYG (197 aa)) is the Rab-GAP TBC domain. A helical membrane pass occupies residues 798 to 818 (LYDILFLYGPGILFNFGLALL).

The protein belongs to the GYP5 family.

The protein localises to the membrane. The protein resides in the cytoplasm. Its function is as follows. GTPase-activating protein involved in ER to Golgi trafficking and polarized exocytosis. In Schizosaccharomyces pombe (strain 972 / ATCC 24843) (Fission yeast), this protein is GTPase activating protein Gyp51 (gyp51).